We begin with the raw amino-acid sequence, 269 residues long: Glutamate racemase (269 aa).

Substrate-binding positions include Asp-7–Ser-8 and Tyr-39–Gly-40. Cys-70 functions as the Proton donor/acceptor in the catalytic mechanism. Asn-71–Thr-72 lines the substrate pocket. The Proton donor/acceptor role is filled by Cys-194. Thr-195 to His-196 serves as a coordination point for substrate.

Belongs to the aspartate/glutamate racemases family.

The enzyme catalyses L-glutamate = D-glutamate. It functions in the pathway cell wall biogenesis; peptidoglycan biosynthesis. Provides the (R)-glutamate required for cell wall biosynthesis. The sequence is that of Glutamate racemase from Ruegeria sp. (strain TM1040) (Silicibacter sp.).